A 375-amino-acid polypeptide reads, in one-letter code: Queuine tRNA-ribosyltransferase (375 aa).

Residue Asp89 is the Proton acceptor of the active site. Substrate contacts are provided by residues 89–93 (DSGGF), Asp143, Gln187, and Gly214. Residues 245-251 (GVGKPED) form an RNA binding region. Asp264 acts as the Nucleophile in catalysis. Residues 269 to 273 (TRNAR) are RNA binding; important for wobble base 34 recognition. Positions 302, 304, 307, and 333 each coordinate Zn(2+).

The protein belongs to the queuine tRNA-ribosyltransferase family. In terms of assembly, homodimer. Within each dimer, one monomer is responsible for RNA recognition and catalysis, while the other monomer binds to the replacement base PreQ1. Requires Zn(2+) as cofactor.

The enzyme catalyses 7-aminomethyl-7-carbaguanine + guanosine(34) in tRNA = 7-aminomethyl-7-carbaguanosine(34) in tRNA + guanine. It functions in the pathway tRNA modification; tRNA-queuosine biosynthesis. Functionally, catalyzes the base-exchange of a guanine (G) residue with the queuine precursor 7-aminomethyl-7-deazaguanine (PreQ1) at position 34 (anticodon wobble position) in tRNAs with GU(N) anticodons (tRNA-Asp, -Asn, -His and -Tyr). Catalysis occurs through a double-displacement mechanism. The nucleophile active site attacks the C1' of nucleotide 34 to detach the guanine base from the RNA, forming a covalent enzyme-RNA intermediate. The proton acceptor active site deprotonates the incoming PreQ1, allowing a nucleophilic attack on the C1' of the ribose to form the product. After dissociation, two additional enzymatic reactions on the tRNA convert PreQ1 to queuine (Q), resulting in the hypermodified nucleoside queuosine (7-(((4,5-cis-dihydroxy-2-cyclopenten-1-yl)amino)methyl)-7-deazaguanosine). This chain is Queuine tRNA-ribosyltransferase, found in Citrobacter koseri (strain ATCC BAA-895 / CDC 4225-83 / SGSC4696).